The following is a 245-amino-acid chain: Orotidine 5'-phosphate decarboxylase (245 aa).

Substrate is bound by residues D22, K44, 71–80 (DLKFHDIPNT), T131, R192, Q201, G221, and R222. The active-site Proton donor is K73.

It belongs to the OMP decarboxylase family. Type 1 subfamily. In terms of assembly, homodimer.

The catalysed reaction is orotidine 5'-phosphate + H(+) = UMP + CO2. It functions in the pathway pyrimidine metabolism; UMP biosynthesis via de novo pathway; UMP from orotate: step 2/2. Catalyzes the decarboxylation of orotidine 5'-monophosphate (OMP) to uridine 5'-monophosphate (UMP). The polypeptide is Orotidine 5'-phosphate decarboxylase (Shigella boydii serotype 18 (strain CDC 3083-94 / BS512)).